Here is a 134-residue protein sequence, read N- to C-terminus: Phosphomevalonate dehydratase small subunit (134 aa).

Ser62 (proton acceptor) is an active-site residue.

The protein belongs to the AcnX type II small subunit family. As to quaternary structure, heterodimer composed of a large subunit (PMDh-L) and a small subunit (PMDh-S).

The enzyme catalyses (R)-5-phosphomevalonate = (2E)-3-methyl-5-phosphooxypent-2-enoate + H2O. The protein operates within isoprenoid biosynthesis; isopentenyl diphosphate biosynthesis via mevalonate pathway. In terms of biological role, component of a hydro-lyase that catalyzes the dehydration of mevalonate 5-phosphate (MVA5P) to form trans-anhydromevalonate 5-phosphate (tAHMP). Involved in the archaeal mevalonate (MVA) pathway, which provides fundamental precursors for isoprenoid biosynthesis, such as isopentenyl diphosphate (IPP) and dimethylallyl diphosphate (DMAPP). This Pyrococcus furiosus (strain ATCC 43587 / DSM 3638 / JCM 8422 / Vc1) protein is Phosphomevalonate dehydratase small subunit.